The primary structure comprises 396 residues: NADH-quinone oxidoreductase subunit D (396 aa).

This sequence belongs to the complex I 49 kDa subunit family. NDH-1 is composed of 14 different subunits. Subunits NuoB, C, D, E, F, and G constitute the peripheral sector of the complex.

Its subcellular location is the cell inner membrane. The catalysed reaction is a quinone + NADH + 5 H(+)(in) = a quinol + NAD(+) + 4 H(+)(out). In terms of biological role, NDH-1 shuttles electrons from NADH, via FMN and iron-sulfur (Fe-S) centers, to quinones in the respiratory chain. The immediate electron acceptor for the enzyme in this species is believed to be ubiquinone. Couples the redox reaction to proton translocation (for every two electrons transferred, four hydrogen ions are translocated across the cytoplasmic membrane), and thus conserves the redox energy in a proton gradient. This Chelativorans sp. (strain BNC1) protein is NADH-quinone oxidoreductase subunit D.